A 439-amino-acid polypeptide reads, in one-letter code: Sodium-dependent phosphate transport protein 3 (439 aa).

N-linked (GlcNAc...) asparagine glycans are attached at residues Asn47, Asn56, Asn68, and Asn69. 9 helical membrane-spanning segments follow: residues 98-118, 130-150, 183-203, 211-231, 273-293, 317-337, 350-369, 374-396, and 415-435; these read INYG…IFGA, SLLT…VIMV, TIAG…GGLI, FIFY…FTVI, LPLW…TIIL, LPFI…DFLL, LFSS…LPFV, VITI…GFII, and GFGL…ISQV.

This sequence belongs to the major facilitator superfamily. Sodium/anion cotransporter family. Expressed in the small intestine, kidney, spleen and testis. Not detected in fetal brain, bone marrow, and mammary gland.

It localises to the apical cell membrane. The enzyme catalyses 3 Na(+)(out) + phosphate(out) = 3 Na(+)(in) + phosphate(in). The catalysed reaction is urate(out) + n chloride(in) = urate(in) + n chloride(out). In terms of biological role, acts as a membrane potential-dependent organic anion transporter, the transport requires a low concentration of chloride ions. Mediates chloride-dependent transport of urate. Can actively transport inorganic phosphate into cells via Na(+) cotransport. The polypeptide is Sodium-dependent phosphate transport protein 3 (SLC17A2) (Homo sapiens (Human)).